The chain runs to 82 residues: Large ribosomal subunit protein uL23 (82 aa).

The protein belongs to the universal ribosomal protein uL23 family. As to quaternary structure, part of the 50S ribosomal subunit. Contacts protein L29.

In terms of biological role, binds to 23S rRNA. One of the proteins that surrounds the polypeptide exit tunnel on the outside of the ribosome. This is Large ribosomal subunit protein uL23 from Sulfolobus acidocaldarius (strain ATCC 33909 / DSM 639 / JCM 8929 / NBRC 15157 / NCIMB 11770).